The following is a 914-amino-acid chain: Coatomer subunit beta' (914 aa).

7 WD repeats span residues 13 to 54 (SRSD…KDFE), 55 to 94 (VCDVPVRSARFVARKNWILTGSDDMQIRVFNYNTLEKVHS), 97 to 136 (AHSDYLRCIAVHPTQPLVLTSSDDMLIKLWNWEKMWACQR), 140 to 180 (GHTH…ANFT), 183 to 224 (GHEK…CVQT), 227 to 266 (GHAQNISAVCFHPELPIVLTGSEDGTVRIWHSGTYRLETC), and 352 to 390 (ACEIYPQTIAHNPNGRFVVVCGDGEYIIYTSMALRNKAF).

Belongs to the WD repeat COPB2 family. In terms of assembly, oligomeric complex that consists of at least the alpha, beta, beta', gamma, delta, epsilon and zeta subunits.

It localises to the cytoplasm. Its subcellular location is the golgi apparatus membrane. The protein localises to the cytoplasmic vesicle. It is found in the COPI-coated vesicle membrane. Functionally, the coatomer is a cytosolic protein complex that binds to dilysine motifs and reversibly associates with Golgi non-clathrin-coated vesicles, which further mediate biosynthetic protein transport from the ER, via the Golgi up to the trans Golgi network. Coatomer complex is required for budding from Golgi membranes, and is essential for the retrograde Golgi-to-ER transport of dilysine-tagged proteins. In Drosophila melanogaster (Fruit fly), this protein is Coatomer subunit beta'.